A 515-amino-acid polypeptide reads, in one-letter code: Bifunctional purine biosynthesis protein PurH (515 aa).

One can recognise an MGS-like domain in the interval methionine 1–valine 145.

The protein belongs to the PurH family.

It carries out the reaction (6R)-10-formyltetrahydrofolate + 5-amino-1-(5-phospho-beta-D-ribosyl)imidazole-4-carboxamide = 5-formamido-1-(5-phospho-D-ribosyl)imidazole-4-carboxamide + (6S)-5,6,7,8-tetrahydrofolate. It catalyses the reaction IMP + H2O = 5-formamido-1-(5-phospho-D-ribosyl)imidazole-4-carboxamide. Its pathway is purine metabolism; IMP biosynthesis via de novo pathway; 5-formamido-1-(5-phospho-D-ribosyl)imidazole-4-carboxamide from 5-amino-1-(5-phospho-D-ribosyl)imidazole-4-carboxamide (10-formyl THF route): step 1/1. It participates in purine metabolism; IMP biosynthesis via de novo pathway; IMP from 5-formamido-1-(5-phospho-D-ribosyl)imidazole-4-carboxamide: step 1/1. This is Bifunctional purine biosynthesis protein PurH from Streptococcus uberis (strain ATCC BAA-854 / 0140J).